The following is a 157-amino-acid chain: Endoribonuclease YbeY (157 aa).

Zn(2+) contacts are provided by His-116, His-120, and His-126.

Belongs to the endoribonuclease YbeY family. Zn(2+) serves as cofactor.

Its subcellular location is the cytoplasm. Functionally, single strand-specific metallo-endoribonuclease involved in late-stage 70S ribosome quality control and in maturation of the 3' terminus of the 16S rRNA. This chain is Endoribonuclease YbeY, found in Paenarthrobacter aurescens (strain TC1).